We begin with the raw amino-acid sequence, 294 residues long: Cytidine deaminase (294 aa).

2 consecutive CMP/dCMP-type deaminase domains span residues 48–168 and 186–294; these read DEDA…FGPK and LTGD…VLLA. Residue 89–91 participates in substrate binding; that stretch reads NME. Residue histidine 102 coordinates Zn(2+). Glutamate 104 serves as the catalytic Proton donor. Residues cysteine 129 and cysteine 132 each contribute to the Zn(2+) site.

It belongs to the cytidine and deoxycytidylate deaminase family. Homodimer. Requires Zn(2+) as cofactor.

The catalysed reaction is cytidine + H2O + H(+) = uridine + NH4(+). The enzyme catalyses 2'-deoxycytidine + H2O + H(+) = 2'-deoxyuridine + NH4(+). In terms of biological role, this enzyme scavenges exogenous and endogenous cytidine and 2'-deoxycytidine for UMP synthesis. The polypeptide is Cytidine deaminase (Escherichia coli O7:K1 (strain IAI39 / ExPEC)).